A 457-amino-acid polypeptide reads, in one-letter code: Argininosuccinate lyase (457 aa).

The protein belongs to the lyase 1 family. Argininosuccinate lyase subfamily.

Its subcellular location is the cytoplasm. It catalyses the reaction 2-(N(omega)-L-arginino)succinate = fumarate + L-arginine. It functions in the pathway amino-acid biosynthesis; L-arginine biosynthesis; L-arginine from L-ornithine and carbamoyl phosphate: step 3/3. This chain is Argininosuccinate lyase, found in Shigella dysenteriae serotype 1 (strain Sd197).